The following is a 1396-amino-acid chain: DNA-directed RNA polymerase subunit beta (1396 aa).

Belongs to the RNA polymerase beta chain family. In terms of assembly, the RNAP catalytic core consists of 2 alpha, 1 beta, 1 beta' and 1 omega subunit. When a sigma factor is associated with the core the holoenzyme is formed, which can initiate transcription.

It carries out the reaction RNA(n) + a ribonucleoside 5'-triphosphate = RNA(n+1) + diphosphate. DNA-dependent RNA polymerase catalyzes the transcription of DNA into RNA using the four ribonucleoside triphosphates as substrates. This chain is DNA-directed RNA polymerase subunit beta, found in Erythrobacter litoralis (strain HTCC2594).